The primary structure comprises 234 residues: Glycerol uptake facilitator protein (234 aa).

6 helical membrane-spanning segments follow: residues 9-29 (FLGT…VVLP), 37-57 (GWIV…FVSG), 61-81 (PAHL…LPWA), 83-103 (VLPY…LVWL), 135-155 (LISE…LGLY), and 159-179 (AGIG…SLGG). The NPA 1 motif lies at 65–67 (NPA). The NPA 2 signature appears at 186–188 (NPA). The helical transmembrane segment at 214 to 234 (WIPVVGPVIGAALAVLVFSLF) threads the bilayer.

Belongs to the MIP/aquaporin (TC 1.A.8) family.

Its subcellular location is the cell membrane. The enzyme catalyses glycerol(in) = glycerol(out). Functionally, mediates glycerol diffusion across the cytoplasmic membrane via a pore-type mechanism. This chain is Glycerol uptake facilitator protein (glpF), found in Streptococcus pneumoniae (strain ATCC BAA-255 / R6).